Consider the following 551-residue polypeptide: MASHHHHNHNHVCSRHQNHHNNTPQFATSPNCCNKSNHPSPPPAEDNLLHLVATYLQNHQQETQCSCETSCQNFNVIRSQNRVLRQHKNVPREYDQVVLSCLLRKIDDLESSLNKFSSFYDKRRDRHSTLRDSAARVIQTHFRSYLVHRSISFRQLKELAMIKASFLSLKSSVSGKLIFPFKVVSRKATDLLLQLDSIQGRIDPMIRSSKRSLSRDLVRFVQYVDDCVVKRYGFVVKSGSGIKLNGKKPQGFGTSSEDEDNNADMSDDSEEVPVSSIDKRKVASSKSRTGVVIEGDVVKPPVMKFVVLDKNRNVCQVYGNRHDLTSSAEDDSVDGDEETLVMSRDNGRKQSLKARNGVSVKGGGGKTTRVVKTVSFDENGNVCKVYGDTHDLTSSAEDDDSVDVGEETLVMCRDEGKRRSSKTGSRVLVKGSGGKTNRVVKTVSFDENGNVYKAYGDTPESSIISEEDDSTSGSNEGNGEEKGNVNEVEEIKYVPKENESFEEEEEKETDSENEVSSSEGSEGDKRVTKKEVQHQKGSLMFSPPLPLKMEP.

A compositionally biased stretch (basic residues) spans 1–19 (MASHHHHNHNHVCSRHQNH). The segment at 1 to 46 (MASHHHHNHNHVCSRHQNHHNNTPQFATSPNCCNKSNHPSPPPAED) is disordered. The N-terminal 52 residues, 1–52 (MASHHHHNHNHVCSRHQNHHNNTPQFATSPNCCNKSNHPSPPPAEDNLLHLV), are a transit peptide targeting the chloroplast. Positions 20–38 (HNNTPQFATSPNCCNKSNH) are enriched in polar residues. Residues 131-160 (RDSAARVIQTHFRSYLVHRSISFRQLKELA) form the IQ domain. In terms of domain architecture, BAG spans 147-228 (VHRSISFRQL…RFVQYVDDCV (82 aa)). The segment at 246-281 (GKKPQGFGTSSEDEDNNADMSDDSEEVPVSSIDKRK) is disordered. The segment covering 256–271 (SEDEDNNADMSDDSEE) has biased composition (acidic residues). Ser-332 is subject to Phosphoserine. Disordered regions lie at residues 414 to 433 (DEGKRRSSKTGSRVLVKGSG) and 450 to 551 (NVYK…KMEP). Over residues 479–499 (GEEKGNVNEVEEIKYVPKENE) the composition is skewed to basic and acidic residues. Residues 500-513 (SFEEEEEKETDSEN) show a composition bias toward acidic residues. A compositionally biased stretch (basic and acidic residues) spans 522 to 534 (EGDKRVTKKEVQH).

Binds to the ATPase domain of HSP70/HSC70 chaperones.

It localises to the plastid. It is found in the chloroplast. Co-chaperone that regulates diverse cellular pathways, such as programmed cell death and stress responses. The protein is BAG family molecular chaperone regulator 8, chloroplastic (BAG1) of Arabidopsis thaliana (Mouse-ear cress).